The primary structure comprises 175 residues: MRDRRSSYEYEDLLACGRGELFGAGNAQLPLPPMLMFDRITTITEDGGEFGKGHVRAELDVNPDLWFFACHFKNDPVMPGCLGLDAMWQMVGFFLGWVGGEGPGRALGLGELKFTGQVLPNISKVVYNVDIKRVMRSKLWLGIADGWLSADDEIIYRAKDLKVGLFKQTAQPVAG.

His-71 is an active-site residue.

It belongs to the thioester dehydratase family. FabA subfamily. As to quaternary structure, homodimer.

It localises to the cytoplasm. The enzyme catalyses a (3R)-hydroxyacyl-[ACP] = a (2E)-enoyl-[ACP] + H2O. It catalyses the reaction (3R)-hydroxydecanoyl-[ACP] = (2E)-decenoyl-[ACP] + H2O. The catalysed reaction is (2E)-decenoyl-[ACP] = (3Z)-decenoyl-[ACP]. Its pathway is lipid metabolism; fatty acid biosynthesis. Necessary for the introduction of cis unsaturation into fatty acids. Catalyzes the dehydration of (3R)-3-hydroxydecanoyl-ACP to E-(2)-decenoyl-ACP and then its isomerization to Z-(3)-decenoyl-ACP. Can catalyze the dehydratase reaction for beta-hydroxyacyl-ACPs with saturated chain lengths up to 16:0, being most active on intermediate chain length. This chain is 3-hydroxydecanoyl-[acyl-carrier-protein] dehydratase, found in Rhodopseudomonas palustris (strain ATCC BAA-98 / CGA009).